The sequence spans 102 residues: Auxin-responsive protein SAUR68 (102 aa).

The protein belongs to the ARG7 family.

It localises to the cell membrane. Functionally, may promote auxin-stimulated organ elongation, such as hypocotyls, stamen filaments and petals. The chain is Auxin-responsive protein SAUR68 from Arabidopsis thaliana (Mouse-ear cress).